Here is a 518-residue protein sequence, read N- to C-terminus: Lysine 5,6-aminomutase alpha subunit (518 aa).

Pyridoxal 5'-phosphate contacts are provided by residues Arg184 to Ser189, Ser238, Tyr263, Arg268, and Asn299.

Belongs to the KamD family. In terms of assembly, heterotetramer of 2 alpha and 2 beta subunits. Requires adenosylcob(III)alamin as cofactor. It depends on pyridoxal 5'-phosphate as a cofactor.

The catalysed reaction is (3S)-3,6-diaminohexanoate = (3S,5S)-3,5-diaminohexanoate. The enzyme catalyses D-lysine = (2R,5S)-2,5-diaminohexanoate. It functions in the pathway amino-acid degradation; L-lysine degradation via acetate pathway. Its function is as follows. Catalyzes the migration of the L-beta-lysine and D-lysine epsilon amino group to the delta carbon to produce 3,5-diaminohexanoate and 2,5-diaminohexanoate, respectively. The polypeptide is Lysine 5,6-aminomutase alpha subunit (Fusobacterium nucleatum subsp. nucleatum (strain ATCC 25586 / DSM 15643 / BCRC 10681 / CIP 101130 / JCM 8532 / KCTC 2640 / LMG 13131 / VPI 4355)).